The sequence spans 111 residues: MNNWQEELFLKIIKREEPATILYEDDKVIAFLDKYAHTKGHFLVVPKNYSRNLFSISDEDLSYLIVKAREFALQEIKKLGATGFKLLINNEPDAEQSIFHTHVHIIPYYKK.

One can recognise an HIT domain in the interval 8 to 111 (LFLKIIKREE…HVHIIPYYKK (104 aa)). Positions 100-104 (HTHVH) match the Histidine triad motif motif.

This is an uncharacterized protein from Mesomycoplasma hyorhinis (Mycoplasma hyorhinis).